Here is a 1012-residue protein sequence, read N- to C-terminus: Alanine--tRNA ligase, mitochondrial (1012 aa).

The transit peptide at 1-24 (MYNSAKQLQRVLTAREIRKTFLDH) directs the protein to the mitochondrion. Zn(2+) is bound by residues H656, H660, C766, and H770.

This sequence belongs to the class-II aminoacyl-tRNA synthetase family. In terms of assembly, monomer. It depends on Zn(2+) as a cofactor.

It is found in the mitochondrion. The catalysed reaction is tRNA(Ala) + L-alanine + ATP = L-alanyl-tRNA(Ala) + AMP + diphosphate. Its function is as follows. Catalyzes the attachment of alanine to tRNA(Ala) in a two-step reaction: alanine is first activated by ATP to form Ala-AMP and then transferred to the acceptor end of tRNA(Ala). Also edits incorrectly charged tRNA(Ala) via its editing domain. This is Alanine--tRNA ligase, mitochondrial from Drosophila melanogaster (Fruit fly).